Here is a 299-residue protein sequence, read N- to C-terminus: ATP phosphoribosyltransferase (299 aa).

This sequence belongs to the ATP phosphoribosyltransferase family. Long subfamily. In terms of assembly, equilibrium between an active dimeric form, an inactive hexameric form and higher aggregates. Interconversion between the various forms is largely reversible and is influenced by the natural substrates and inhibitors of the enzyme. Requires Mg(2+) as cofactor.

The protein localises to the cytoplasm. The enzyme catalyses 1-(5-phospho-beta-D-ribosyl)-ATP + diphosphate = 5-phospho-alpha-D-ribose 1-diphosphate + ATP. It participates in amino-acid biosynthesis; L-histidine biosynthesis; L-histidine from 5-phospho-alpha-D-ribose 1-diphosphate: step 1/9. With respect to regulation, feedback inhibited by histidine. Functionally, catalyzes the condensation of ATP and 5-phosphoribose 1-diphosphate to form N'-(5'-phosphoribosyl)-ATP (PR-ATP). Has a crucial role in the pathway because the rate of histidine biosynthesis seems to be controlled primarily by regulation of HisG enzymatic activity. The sequence is that of ATP phosphoribosyltransferase from Proteus mirabilis (strain HI4320).